Consider the following 155-residue polypeptide: UPF0251 protein Paes_1249 (155 aa).

The protein belongs to the UPF0251 family.

This Prosthecochloris aestuarii (strain DSM 271 / SK 413) protein is UPF0251 protein Paes_1249.